Here is a 200-residue protein sequence, read N- to C-terminus: Snake venom metalloproteinase BmooMP-I (200 aa).

Positions R5–P200 constitute a Peptidase M12B domain. Residues E8 and D92 each coordinate Ca(2+). Cystine bridges form between C116/C195, C155/C179, and C157/C162. A Zn(2+)-binding site is contributed by H141. The active site involves E142. Residues H145 and H151 each contribute to the Zn(2+) site. Positions 195 and 198 each coordinate Ca(2+).

It belongs to the venom metalloproteinase (M12B) family. P-I subfamily. As to quaternary structure, monomer. It depends on Zn(2+) as a cofactor. Expressed by the venom gland.

The protein resides in the secreted. In terms of biological role, zinc metalloprotease that displays fibrinogenolytic, gelatinase and weak hemorrhagic activities. Degrades the three chain of fibrinogen Aalpha-chain (FGA), Bbeta-chain (FGB), and gamma (FGG). This Bothrops moojeni (Lance-headed viper) protein is Snake venom metalloproteinase BmooMP-I.